We begin with the raw amino-acid sequence, 57 residues long: Mambaquaretin-3 (57 aa).

The 51-residue stretch at 5–55 (CNLPVKPGPCNGFFSAFYYSQKKNKCHSFTYGGCKGNANRFSTIEECRRTC) folds into the BPTI/Kunitz inhibitor domain. Cystine bridges form between Cys-5–Cys-55, Cys-14–Cys-38, and Cys-30–Cys-51.

It belongs to the venom Kunitz-type family. In terms of tissue distribution, expressed by the venom gland.

It is found in the secreted. Its function is as follows. Interacts with vasopressin V2 receptor (V2R/AVPR2), probably in a selective manner. Inhibits vasopressin binding human V2R in the nanomolar range (Ki=13.3 nM), and also moderately inhibits vasopressin-induced cAMP production (IC(50)=453 nM). In vivo, intraperitoneal injection of this protein into rats increases diuresis by 4.5-fold, without any loss of electrolytes. In Dendroaspis polylepis polylepis (Black mamba), this protein is Mambaquaretin-3.